The primary structure comprises 302 residues: MSMWGAVRCRLIQTRSAVRKILQQNRAFCSGSSVGIREKLLAFPGGSVELQKLQESGIAVLTVSNPPARMNAFSGCMMLELEQRVNELEIWTEGKAVIVQGAAGNFCSGSDLNAVRAIANPHDGMKMCEFMQNTLARLLRLPLISVALVEGRALGGGAELTTACDFRLMTSDAVIQFVHKHMGLVPGWGGAARLVGIIGSRNALKLLSGARKVDPDYGKQMGLVDEVLQCSSGEGKALAHAEHWIAPFIKGPAPVIQAIKKVVVSGRELSLDEALKCERSVFGTVWGGPANLEALASKPKHK.

Belongs to the enoyl-CoA hydratase/isomerase family.

Its subcellular location is the cytoplasm. It is found in the cytosol. The catalysed reaction is (2S)-ethylmalonyl-CoA + H(+) = butanoyl-CoA + CO2. It catalyses the reaction (S)-methylmalonyl-CoA + H(+) = propanoyl-CoA + CO2. It carries out the reaction (2R)-ethylmalonyl-CoA + H(+) = butanoyl-CoA + CO2. Its function is as follows. Decarboxylates ethylmalonyl-CoA, a potentially toxic metabolite, to form butyryl-CoA, suggesting it might be involved in metabolite proofreading. Acts preferentially on (S)-ethylmalonyl-CoA but also has some activity on the (R)-isomer. Also has methylmalonyl-CoA decarboxylase activity at lower level. This chain is Ethylmalonyl-CoA decarboxylase (echdc1), found in Danio rerio (Zebrafish).